The primary structure comprises 142 residues: Mitochondrial import receptor subunit TOM22 homolog (142 aa).

Over residues 1–11 the composition is skewed to low complexity; that stretch reads MAAAVAAAGAG. Residues 1–40 are disordered; it reads MAAAVAAAGAGEPLSPEELVPKAEAEKAEEDLEEDDDDEL. Alanine 2 carries the post-translational modification N-acetylalanine. Topologically, residues 2 to 82 are cytoplasmic; it reads AAAVAAAGAG…VAQKMYRFSR (81 aa). Serine 15 is subject to Phosphoserine. The segment covering 27–40 has biased composition (acidic residues); it reads KAEEDLEEDDDDEL. The import sequence; necessary for mitochondrion outer membrane localization and integration in the TOM complex stretch occupies residues 41 to 50; it reads DETLSERLWG. Threonine 43 is modified (phosphothreonine). Phosphoserine is present on serine 45. A helical membrane pass occupies residues 83 to 103; the sequence is AALWIGTTSFMILVLPVVFET. The TMD; necessary for mitochondrion outer membrane localization and integration in the TOM complex stretch occupies residues 83–103; it reads AALWIGTTSFMILVLPVVFET. Topologically, residues 104-142 are mitochondrial intermembrane; sequence EKLQMEQQQQLQQRQILLGPNTGLSGGMPGALPPLPGKI. A C-tail signal; necessary for mitochondrion outer membrane localization and integration in the TOM complex region spans residues 123 to 142; the sequence is PNTGLSGGMPGALPPLPGKI.

The protein belongs to the Tom22 family. As to quaternary structure, forms part of the preprotein translocase complex of the outer mitochondrial membrane (TOM complex) which consists of at least 7 different proteins (TOMM5, TOMM6, TOMM7, TOMM20, TOMM22, TOMM40 and TOMM70). Interacts with TOMM40. Interacts with PPP2R2B.

It localises to the mitochondrion outer membrane. Central receptor component of the translocase of the outer membrane of mitochondria (TOM complex) responsible for the recognition and translocation of cytosolically synthesized mitochondrial preproteins. Together with the peripheral receptor TOM20 functions as the transit peptide receptor and facilitates the movement of preproteins into the translocation pore. Required for the translocation across the mitochondrial outer membrane of cytochrome P450 monooxygenases. The chain is Mitochondrial import receptor subunit TOM22 homolog (Tomm22) from Rattus norvegicus (Rat).